Reading from the N-terminus, the 147-residue chain is Large ribosomal subunit protein bL9 (147 aa).

The protein belongs to the bacterial ribosomal protein bL9 family.

Binds to the 23S rRNA. This is Large ribosomal subunit protein bL9 from Clostridium botulinum (strain Alaska E43 / Type E3).